A 492-amino-acid chain; its full sequence is 2,3-bisphosphoglycerate-independent phosphoglycerate mutase (492 aa).

Residues Asp11 and Ser61 each coordinate Mn(2+). The active-site Phosphoserine intermediate is the Ser61. Residues His118, 147–148 (RD), Arg178, Arg184, 248–251 (RNDR), and Lys320 contribute to the substrate site. Positions 386, 390, 427, 428, and 445 each coordinate Mn(2+).

Belongs to the BPG-independent phosphoglycerate mutase family. Monomer. The cofactor is Mn(2+).

The catalysed reaction is (2R)-2-phosphoglycerate = (2R)-3-phosphoglycerate. It functions in the pathway carbohydrate degradation; glycolysis; pyruvate from D-glyceraldehyde 3-phosphate: step 3/5. Its function is as follows. Catalyzes the interconversion of 2-phosphoglycerate and 3-phosphoglycerate. The protein is 2,3-bisphosphoglycerate-independent phosphoglycerate mutase of Campylobacter jejuni subsp. jejuni serotype O:6 (strain 81116 / NCTC 11828).